Consider the following 883-residue polypeptide: Ankyrin repeat and SAM domain-containing protein 6 (883 aa).

ANK repeat units follow at residues 8-37 (PGLQ…DPVA), 68-97 (AGNS…SVNS), 101-130 (YGWS…DVNA), 134-163 (LGAS…IVDH), 181-210 (LGIT…DPNH), 215-244 (VGWS…NPDH), 282-312 (KRRP…HVNL), 316-345 (DGAT…DMDK), 350-379 (HGWT…DVAL), and 383-414 (NGYT…QVNK). The tract at residues 30 to 50 (EPGADPVAGPEAGAEPAGPEA) is disordered. Disordered regions lie at residues 414–439 (KDRG…IPVL), 490–522 (MRAP…RREK), 566–773 (SHTC…ITDE), and 852–883 (SFES…SSRR). A compositionally biased stretch (basic and acidic residues) spans 566–576 (SHTCHNGKADP). Positions 607 to 630 (PSISRSPASPASSGSFNHSPHSSG) are enriched in low complexity. Gly residues predominate over residues 631–640 (GASGIGGMSR). Serine 649 bears the Phosphoserine mark. The span at 649–661 (SGGSVDSVLSQIA) shows a compositional bias: polar residues. 2 stretches are compositionally biased toward low complexity: residues 687-711 (SSSP…PSSS) and 720-737 (PPSG…TLTP). A phosphoserine mark is found at serine 732 and serine 740. Over residues 748-768 (SSVSSSSSHRQSKSSGGSSSG) the composition is skewed to low complexity. The 64-residue stretch at 771–834 (TDEDELTGIL…LAAISELNAG (64 aa)) folds into the SAM domain. Residues 852–862 (SFESSASNTRA) are compositionally biased toward polar residues. Residues 874–883 (RPEETVSSRR) show a composition bias toward basic and acidic residues.

In terms of assembly, homooligomer. Interacts with NEK8. Central component of a complex containing at least ANKS6, INVS, NEK8 and NPHP3. ANKS6 may organize complex assembly by linking INVS and NPHP3 to NEK8 and INVS may target the complex to the proximal ciliary axoneme. Interacts (via SAM domain) with BICC1 (via KH domains) in an RNA-dependent manner. Interacts (via SAM domain) with ANKS3 (via SAM domain). Hydroxylated at Asn-129, most probably by HIF1AN. This hydroxylation results in decreased NEK8-binding. Expressed in kidney (at protein level).

It localises to the cell projection. Its subcellular location is the cilium. The protein resides in the cytoplasm. Required for renal function. This Mus musculus (Mouse) protein is Ankyrin repeat and SAM domain-containing protein 6 (Anks6).